The chain runs to 229 residues: Thiamine-phosphate synthase (229 aa).

Residues 38-42 and Asn-73 each bind 4-amino-2-methyl-5-(diphosphooxymethyl)pyrimidine; that span reads QFREK. Positions 74 and 93 each coordinate Mg(2+). Residue Ser-111 participates in 4-amino-2-methyl-5-(diphosphooxymethyl)pyrimidine binding. A 2-[(2R,5Z)-2-carboxy-4-methylthiazol-5(2H)-ylidene]ethyl phosphate-binding site is contributed by 137–139; the sequence is TLS. Lys-140 is a binding site for 4-amino-2-methyl-5-(diphosphooxymethyl)pyrimidine. 2-[(2R,5Z)-2-carboxy-4-methylthiazol-5(2H)-ylidene]ethyl phosphate-binding positions include Gly-169 and 189 to 190; that span reads IS.

Belongs to the thiamine-phosphate synthase family. Requires Mg(2+) as cofactor.

The enzyme catalyses 2-[(2R,5Z)-2-carboxy-4-methylthiazol-5(2H)-ylidene]ethyl phosphate + 4-amino-2-methyl-5-(diphosphooxymethyl)pyrimidine + 2 H(+) = thiamine phosphate + CO2 + diphosphate. The catalysed reaction is 2-(2-carboxy-4-methylthiazol-5-yl)ethyl phosphate + 4-amino-2-methyl-5-(diphosphooxymethyl)pyrimidine + 2 H(+) = thiamine phosphate + CO2 + diphosphate. It carries out the reaction 4-methyl-5-(2-phosphooxyethyl)-thiazole + 4-amino-2-methyl-5-(diphosphooxymethyl)pyrimidine + H(+) = thiamine phosphate + diphosphate. Its pathway is cofactor biosynthesis; thiamine diphosphate biosynthesis; thiamine phosphate from 4-amino-2-methyl-5-diphosphomethylpyrimidine and 4-methyl-5-(2-phosphoethyl)-thiazole: step 1/1. In terms of biological role, condenses 4-methyl-5-(beta-hydroxyethyl)thiazole monophosphate (THZ-P) and 2-methyl-4-amino-5-hydroxymethyl pyrimidine pyrophosphate (HMP-PP) to form thiamine monophosphate (TMP). This chain is Thiamine-phosphate synthase, found in Streptococcus suis (strain 98HAH33).